Here is a 205-residue protein sequence, read N- to C-terminus: Probable GTP-binding protein EngB (205 aa).

An EngB-type G domain is found at 21-196; sequence QVPEVAFAGR…VHEVSKCVKE (176 aa). GTP-binding positions include 29–36, 56–60, 74–77, 141–144, and 172–177; these read GRSNVGKS, GSTRQ, DLPG, TKID, and IIGTSS. Positions 36 and 58 each coordinate Mg(2+).

This sequence belongs to the TRAFAC class TrmE-Era-EngA-EngB-Septin-like GTPase superfamily. EngB GTPase family. Mg(2+) is required as a cofactor.

In terms of biological role, necessary for normal cell division and for the maintenance of normal septation. The protein is Probable GTP-binding protein EngB of Anaplasma marginale (strain Florida).